A 74-amino-acid polypeptide reads, in one-letter code: Large ribosomal subunit protein uL30 (74 aa).

The protein belongs to the universal ribosomal protein uL30 family. In terms of assembly, part of the 50S ribosomal subunit.

In Koribacter versatilis (strain Ellin345), this protein is Large ribosomal subunit protein uL30.